Consider the following 691-residue polypeptide: Elongation factor G (691 aa).

The 276-residue stretch at 6 to 281 (SRYRNIGIMA…GVVDFLPSPI (276 aa)) folds into the tr-type G domain. Residues 15–22 (AHIDAGKT), 79–83 (DTPGH), and 133–136 (NKMD) contribute to the GTP site.

The protein belongs to the TRAFAC class translation factor GTPase superfamily. Classic translation factor GTPase family. EF-G/EF-2 subfamily.

It is found in the cytoplasm. Functionally, catalyzes the GTP-dependent ribosomal translocation step during translation elongation. During this step, the ribosome changes from the pre-translocational (PRE) to the post-translocational (POST) state as the newly formed A-site-bound peptidyl-tRNA and P-site-bound deacylated tRNA move to the P and E sites, respectively. Catalyzes the coordinated movement of the two tRNA molecules, the mRNA and conformational changes in the ribosome. In Wolbachia pipientis subsp. Culex pipiens (strain wPip), this protein is Elongation factor G.